Consider the following 84-residue polypeptide: Small ribosomal subunit protein uS17 (84 aa).

This sequence belongs to the universal ribosomal protein uS17 family. Part of the 30S ribosomal subunit.

One of the primary rRNA binding proteins, it binds specifically to the 5'-end of 16S ribosomal RNA. This is Small ribosomal subunit protein uS17 from Clostridium beijerinckii (strain ATCC 51743 / NCIMB 8052) (Clostridium acetobutylicum).